Consider the following 145-residue polypeptide: Allergen MAG29 (145 aa).

2 disordered regions span residues 1–21 (KDDI…DDKQ) and 103–145 (AGGA…EEVD). Gly residues predominate over residues 104 to 137 (GGAGAGGMPGGFPGGFPGTDGSGGGAAGGDGGKS).

It belongs to the heat shock protein 70 family.

This chain is Allergen MAG29 (MAG29), found in Dermatophagoides farinae (American house dust mite).